Here is a 73-residue protein sequence, read N- to C-terminus: DNA-directed RNA polymerase subunit epsilon (73 aa).

It belongs to the RNA polymerase subunit epsilon family. As to quaternary structure, RNAP is composed of a core of 2 alpha, a beta and a beta' subunit. The core is associated with a delta subunit, and at least one of epsilon or omega. When a sigma factor is associated with the core the holoenzyme is formed, which can initiate transcription.

It carries out the reaction RNA(n) + a ribonucleoside 5'-triphosphate = RNA(n+1) + diphosphate. Functionally, a non-essential component of RNA polymerase (RNAP). The protein is DNA-directed RNA polymerase subunit epsilon of Lactobacillus helveticus (strain DPC 4571).